We begin with the raw amino-acid sequence, 372 residues long: Glutamate 5-kinase (372 aa).

Lys-14 contributes to the ATP binding site. Residues Ser-54, Asp-141, and Asn-153 each coordinate substrate. Residues 173–174 and 215–221 contribute to the ATP site; these read TD and TGGMITK. The PUA domain occupies 280–358; the sequence is AGRLLLDDGA…REIEAALGYI (79 aa).

This sequence belongs to the glutamate 5-kinase family.

It is found in the cytoplasm. It carries out the reaction L-glutamate + ATP = L-glutamyl 5-phosphate + ADP. The protein operates within amino-acid biosynthesis; L-proline biosynthesis; L-glutamate 5-semialdehyde from L-glutamate: step 1/2. Functionally, catalyzes the transfer of a phosphate group to glutamate to form L-glutamate 5-phosphate. This chain is Glutamate 5-kinase, found in Chromobacterium violaceum (strain ATCC 12472 / DSM 30191 / JCM 1249 / CCUG 213 / NBRC 12614 / NCIMB 9131 / NCTC 9757 / MK).